The chain runs to 239 residues: Ribonuclease PH (239 aa).

Phosphate contacts are provided by residues arginine 86 and 124 to 126 (GTR).

This sequence belongs to the RNase PH family. Homohexameric ring arranged as a trimer of dimers.

The catalysed reaction is tRNA(n+1) + phosphate = tRNA(n) + a ribonucleoside 5'-diphosphate. Its function is as follows. Phosphorolytic 3'-5' exoribonuclease that plays an important role in tRNA 3'-end maturation. Removes nucleotide residues following the 3'-CCA terminus of tRNAs; can also add nucleotides to the ends of RNA molecules by using nucleoside diphosphates as substrates, but this may not be physiologically important. Probably plays a role in initiation of 16S rRNA degradation (leading to ribosome degradation) during starvation. This Sodalis glossinidius (strain morsitans) protein is Ribonuclease PH.